The primary structure comprises 379 residues: Queuine tRNA-ribosyltransferase (379 aa).

Asp94 acts as the Proton acceptor in catalysis. Residues 94-98 (DSGGF), Asp148, Gln191, and Gly218 each bind substrate. Residues 249–255 (GVGSPDS) form an RNA binding region. Asp268 (nucleophile) is an active-site residue. The interval 273-277 (TRIAR) is RNA binding; important for wobble base 34 recognition. Zn(2+) contacts are provided by Cys306, Cys308, Cys311, and His337.

It belongs to the queuine tRNA-ribosyltransferase family. In terms of assembly, homodimer. Within each dimer, one monomer is responsible for RNA recognition and catalysis, while the other monomer binds to the replacement base PreQ1. Zn(2+) serves as cofactor.

The enzyme catalyses 7-aminomethyl-7-carbaguanine + guanosine(34) in tRNA = 7-aminomethyl-7-carbaguanosine(34) in tRNA + guanine. The protein operates within tRNA modification; tRNA-queuosine biosynthesis. In terms of biological role, catalyzes the base-exchange of a guanine (G) residue with the queuine precursor 7-aminomethyl-7-deazaguanine (PreQ1) at position 34 (anticodon wobble position) in tRNAs with GU(N) anticodons (tRNA-Asp, -Asn, -His and -Tyr). Catalysis occurs through a double-displacement mechanism. The nucleophile active site attacks the C1' of nucleotide 34 to detach the guanine base from the RNA, forming a covalent enzyme-RNA intermediate. The proton acceptor active site deprotonates the incoming PreQ1, allowing a nucleophilic attack on the C1' of the ribose to form the product. After dissociation, two additional enzymatic reactions on the tRNA convert PreQ1 to queuine (Q), resulting in the hypermodified nucleoside queuosine (7-(((4,5-cis-dihydroxy-2-cyclopenten-1-yl)amino)methyl)-7-deazaguanosine). This is Queuine tRNA-ribosyltransferase from Listeria monocytogenes serovar 1/2a (strain ATCC BAA-679 / EGD-e).